Here is a 131-residue protein sequence, read N- to C-terminus: Snaclec macrovipecetin subunit alpha (131 aa).

3 disulfides stabilise this stretch: C2–C13, C30–C125, and C100–C117. The C-type lectin domain occupies 9-126; that stretch reads HEEHCYKVFR…CEDKNPFICK (118 aa).

Heterodimer of subunits alpha and beta; disulfide-linked. Expressed by the venom gland.

Its subcellular location is the secreted. Interferes with one step of hemostasis (modulation of platelet aggregation, or coagulation cascade, for example). In Macrovipera lebetinus (Levantine viper), this protein is Snaclec macrovipecetin subunit alpha.